We begin with the raw amino-acid sequence, 164 residues long: Protein SprT (164 aa).

The 143-residue stretch at 14–156 (QLAESFFKRP…LCRRCRQTLV (143 aa)) folds into the SprT-like domain. H69 is a binding site for Zn(2+). E70 is a catalytic residue. H73 lines the Zn(2+) pocket.

Belongs to the SprT family. It depends on Zn(2+) as a cofactor.

It is found in the cytoplasm. This is Protein SprT from Pseudomonas fluorescens (strain ATCC BAA-477 / NRRL B-23932 / Pf-5).